Consider the following 180-residue polypeptide: Large ribosomal subunit protein uL5 (180 aa).

It belongs to the universal ribosomal protein uL5 family. As to quaternary structure, part of the 50S ribosomal subunit; part of the 5S rRNA/L5/L18/L25 subcomplex. Contacts the 5S rRNA and the P site tRNA. Forms a bridge to the 30S subunit in the 70S ribosome.

This is one of the proteins that bind and probably mediate the attachment of the 5S RNA into the large ribosomal subunit, where it forms part of the central protuberance. In the 70S ribosome it contacts protein S13 of the 30S subunit (bridge B1b), connecting the 2 subunits; this bridge is implicated in subunit movement. Contacts the P site tRNA; the 5S rRNA and some of its associated proteins might help stabilize positioning of ribosome-bound tRNAs. This Clostridium tetani (strain Massachusetts / E88) protein is Large ribosomal subunit protein uL5.